The following is a 614-amino-acid chain: Translation initiation factor IF-2 (614 aa).

Residues 115–283 (ARAPIVTIMG…ILLIAELNNY (169 aa)) enclose the tr-type G domain. The segment at 124 to 131 (GHVDHGKT) is G1. GTP is bound at residue 124-131 (GHVDHGKT). The tract at residues 149-153 (GITQH) is G2. The interval 170 to 173 (DTPG) is G3. Residues 170-174 (DTPGH) and 224-227 (NKMD) each bind GTP. Positions 224–227 (NKMD) are G4. Residues 260-262 (SAL) are G5.

Belongs to the TRAFAC class translation factor GTPase superfamily. Classic translation factor GTPase family. IF-2 subfamily.

The protein localises to the cytoplasm. Its function is as follows. One of the essential components for the initiation of protein synthesis. Protects formylmethionyl-tRNA from spontaneous hydrolysis and promotes its binding to the 30S ribosomal subunits. Also involved in the hydrolysis of GTP during the formation of the 70S ribosomal complex. The chain is Translation initiation factor IF-2 from Ureaplasma parvum serovar 3 (strain ATCC 27815 / 27 / NCTC 11736).